We begin with the raw amino-acid sequence, 201 residues long: Ras-related protein Rab-35 (201 aa).

GTP-binding residues include glycine 18, valine 19, glycine 20, lysine 21, serine 22, serine 23, serine 34, glycine 35, tyrosine 37, threonine 39, and threonine 40. Serine 22 contributes to the Mg(2+) binding site. Residues 30–42 carry the Switch 1 motif; that stretch reads DNTFSGSYITTIG. Residues threonine 40 and aspartate 63 each contribute to the Mg(2+) site. The Switch 2 motif lies at 64-80; it reads TAGQERFRTITSTYYRG. A GTP-binding site is contributed by glycine 66. At threonine 72 the chain carries Phosphothreonine; by LRRK2. An O-(2-cholinephosphoryl)serine modification is found at serine 75. Tyrosine 77 carries the post-translational modification O-AMP-tyrosine. Asparagine 120, lysine 121, aspartate 123, alanine 151, and lysine 152 together coordinate GTP. Residues cysteine 200 and cysteine 201 are each lipidated (S-geranylgeranyl cysteine).

This sequence belongs to the small GTPase superfamily. Rab family. In terms of assembly, interacts with DENND1A and DENND1B; in a nucleotide-dependent manner. Interacts with DENND1C; weak interaction which is nucleotide-independent. Interacts (GTP-bound form) with ACAP2, RUSC2, OCRL MICAL1 and MICALL1; the interaction is direct and probably recruits these effectors to membranes. Interacts with EHD1; the interaction is indirect through MICALL1 and probably recruits EHD1 to membranes. Interacts with GDI1, GDI2, CHM and CHML; phosphorylation at Thr-72 by LRRK2 disrupts these interactions. Requires Mg(2+) as cofactor. Post-translationally, phosphorylation at Thr-72 by LRRK2 prevents the association of regulatory proteins including CHM, CHML and GDP dissociation inhibitors GDI1 and GDI2. AMPylation at Tyr-77 by L.pneumophila DrrA occurs in the switch 2 region and leads to moderate inactivation of the GTPase activity. It appears to prolong the lifetime of the GTP state of RAB1B by restricting access of GTPase effectors to switch 2 and blocking effector-stimulated GTP hydrolysis, thereby rendering RAB35 constitutively active. In terms of processing, phosphocholinated by L.pneumophila AnkX. Both GDP-bound and GTP-bound forms can be phosphocholinated. Phosphocholination inhibits the GEF activity of DENND1A.

It is found in the cell membrane. Its subcellular location is the membrane. The protein localises to the clathrin-coated pit. It localises to the cytoplasmic vesicle. The protein resides in the clathrin-coated vesicle. It is found in the endosome. Its subcellular location is the melanosome. The enzyme catalyses GTP + H2O = GDP + phosphate + H(+). With respect to regulation, regulated by guanine nucleotide exchange factors (GEFs) including DENND1A, DENND1B and DENND1C which promote the exchange of bound GDP for free GTP. Regulated by GTPase activating proteins (GAPs) including TBC1D10 and TBC1D13 which increase GTP hydrolysis activity. Inhibited by GDP dissociation inhibitors (GDIs) which prevent Rab-GDP dissociation. Its function is as follows. The small GTPases Rab are key regulators of intracellular membrane trafficking, from the formation of transport vesicles to their fusion with membranes. Rabs cycle between an inactive GDP-bound form and an active GTP-bound form that is able to recruit to membranes different sets of downstream effectors directly responsible for vesicle formation, movement, tethering and fusion. RAB35 is involved in the process of endocytosis and is an essential rate-limiting regulator of the fast recycling pathway back to the plasma membrane. During cytokinesis, required for the postfurrowing terminal steps, namely for intercellular bridge stability and abscission, possibly by controlling phosphatidylinositol 4,5-bis phosphate (PIP2) and SEPT2 localization at the intercellular bridge. May indirectly regulate neurite outgrowth. Together with TBC1D13 may be involved in regulation of insulin-induced glucose transporter SLC2A4/GLUT4 translocation to the plasma membrane in adipocytes. The polypeptide is Ras-related protein Rab-35 (Homo sapiens (Human)).